A 368-amino-acid polypeptide reads, in one-letter code: Endoglucanase (368 aa).

The signal sequence occupies residues 1–21 (MNVLRSGIVTMLLLAAFSVQA). Residue E55 is the Proton donor of the active site. Catalysis depends on D116, which acts as the Nucleophile.

The protein belongs to the glycosyl hydrolase 8 (cellulase D) family.

It localises to the secreted. The catalysed reaction is Endohydrolysis of (1-&gt;4)-beta-D-glucosidic linkages in cellulose, lichenin and cereal beta-D-glucans.. It functions in the pathway glycan metabolism; bacterial cellulose biosynthesis. Functionally, hydrolyzes carboxymethylcellulose. The protein is Endoglucanase (bcsZ) of Escherichia coli (strain K12).